The sequence spans 417 residues: MRTERTSFLLALGLLVSGFCSRVHCLPENVTPEEQHKGTSVDGHSLASSNTDFALSLYKQLALKDPNKNVIFSPLSISIALAFLSLGAHDHTVTEILEGLKFNLTETPETEIHQGFQHLLQTFNQPSNQLQLSVGNAMFASEELKLLDKFRKDAEAFYASEVLSTNFKDSEAAVKLINEYVKNKTHGKIEKLFNDLDVLTNLILLNYIFFKAQWKTPFNPNHTYESEFHVSQNERVIVPMMTLYLETPYFRDEELGCTLVELTYTSNDSALFILPDEGKMQDLEAKLTPETLTRWRSSLQPRLIHRLRLPRFSISSHYQLKDILSQLGIKKIFTSDAGFSGITDDHKLAVSHVIHKAVLDVGEEGTEGAAVTAVVMATSSLLHTLTVSFNRPFLLSIFCKETQSIIFWGKVTNPKEA.

The first 25 residues, 1-25, serve as a signal peptide directing secretion; that stretch reads MRTERTSFLLALGLLVSGFCSRVHC. Residues Asn103, Asn183, Asn221, and Asn267 are each glycosylated (N-linked (GlcNAc...) asparagine).

This sequence belongs to the serpin family. Homodimer.

The protein resides in the cytoplasmic vesicle. It localises to the secretory vesicle. Its subcellular location is the chromaffin granule. The protein localises to the secreted. Its function is as follows. Serine protease inhibitor. In Bos taurus (Bovine), this protein is Serpin A3-7.